A 232-amino-acid chain; its full sequence is 2,3-bisphosphoglycerate-dependent phosphoglycerate mutase 1 (232 aa).

Substrate contacts are provided by residues 8–15 (RHGQSLWN), 21–22 (TG), Arg-58, 114–117 (ERYY), Lys-125, 141–142 (RR), and 185–186 (GN). The active-site Tele-phosphohistidine intermediate is His-9. Glu-114 (proton donor/acceptor) is an active-site residue.

It belongs to the phosphoglycerate mutase family. BPG-dependent PGAM subfamily.

The catalysed reaction is (2R)-2-phosphoglycerate = (2R)-3-phosphoglycerate. It functions in the pathway carbohydrate degradation; glycolysis; pyruvate from D-glyceraldehyde 3-phosphate: step 3/5. In terms of biological role, catalyzes the interconversion of 2-phosphoglycerate and 3-phosphoglycerate. This is 2,3-bisphosphoglycerate-dependent phosphoglycerate mutase 1 from Gloeobacter violaceus (strain ATCC 29082 / PCC 7421).